The chain runs to 229 residues: Calcyclin-binding protein (229 aa).

Ala2 is modified (N-acetylalanine). Residues 2–81 (ASALEELQKD…YTVKISNYGW (80 aa)) form an interaction with SIAH1 region. Residue Ser3 is modified to Phosphoserine. 2 positions are modified to N6-acetyllysine: Lys10 and Lys21. Position 36 is a phosphoserine (Ser36). The segment at 38–59 (IETELRNKMQQKSQKKPEFDNE) is disordered. The CS domain occupies 74–168 (VKISNYGWDQ…AENTRWDYLT (95 aa)). Residues 74–229 (VKISNYGWDQ…EKQAREDTEF (156 aa)) form an interaction with SKP1 region. N6-acetyllysine is present on residues Lys86 and Lys119. Residues 155–229 (CRKKAENTRW…EKQAREDTEF (75 aa)) are interaction with S100A6. Positions 169–229 (QVEKECKEKE…EKQAREDTEF (61 aa)) constitute an SGS domain.

In terms of assembly, component of some large E3 complex at least composed of UBE2D1, SIAH1, CACYBP/SIP, SKP1, APC and TBL1X. Interacts directly with SIAH1, SIAH2 and SKP1. Interacts with protein of the S100 family S100A1, S100A6, S100B, S100P and S100A12 in a calcium-dependent manner. Post-translationally, phosphorylated on serine residues. Phosphorylated upon induction by RA or at high calcium concentrations.

It is found in the nucleus. The protein resides in the cytoplasm. Its function is as follows. May be involved in calcium-dependent ubiquitination and subsequent proteasomal degradation of target proteins. Probably serves as a molecular bridge in ubiquitin E3 complexes. Participates in the ubiquitin-mediated degradation of beta-catenin (CTNNB1). This Rattus norvegicus (Rat) protein is Calcyclin-binding protein (Cacybp).